The sequence spans 466 residues: Cytochrome c-552 (466 aa).

The signal sequence occupies residues 1-27 (MVRILTKKSFALSALVAASLMASGAMA). His87 is a heme c binding site. Heme-binding residues include Cys115, Cys118, and Lys119. Residues Cys153, Cys156, His157, Cys195, Cys198, and His199 each contribute to the heme c site. Glu201, Tyr202, Lys250, and Gln252 together coordinate Ca(2+). Tyr202 is a binding site for substrate. Substrate is bound at residue His253. Heme c-binding residues include His264, Cys271, Cys274, His275, His290, Cys303, Cys306, His307, and His382.

This sequence belongs to the cytochrome c-552 family. Requires Ca(2+) as cofactor. Heme c is required as a cofactor.

Its subcellular location is the periplasm. The enzyme catalyses 6 Fe(III)-[cytochrome c] + NH4(+) + 2 H2O = 6 Fe(II)-[cytochrome c] + nitrite + 8 H(+). It participates in nitrogen metabolism; nitrate reduction (assimilation). Functionally, catalyzes the reduction of nitrite to ammonia, consuming six electrons in the process. This chain is Cytochrome c-552, found in Shewanella woodyi (strain ATCC 51908 / MS32).